Reading from the N-terminus, the 308-residue chain is Cytochrome b (308 aa).

4 consecutive transmembrane segments (helical) span residues 1-21, 45-66, 81-101, and 146-166; these read FGSL…LLAM, WLIR…YFHI, WNIG…GYVL, and FFAL…VHLT. Heme b is bound by residues His51 and His65. 2 residues coordinate heme b: His150 and His164. His169 serves as a coordination point for a ubiquinone. The next 3 helical transmembrane spans lie at 194 to 214, 256 to 276, and 288 to 308; these read TKDI…ALFS, LGGV…PLLH, and LSQI…WVGS.

It belongs to the cytochrome b family. The cytochrome bc1 complex contains 11 subunits: 3 respiratory subunits (MT-CYB, CYC1 and UQCRFS1), 2 core proteins (UQCRC1 and UQCRC2) and 6 low-molecular weight proteins (UQCRH/QCR6, UQCRB/QCR7, UQCRQ/QCR8, UQCR10/QCR9, UQCR11/QCR10 and a cleavage product of UQCRFS1). This cytochrome bc1 complex then forms a dimer. Heme b is required as a cofactor.

It localises to the mitochondrion inner membrane. Its function is as follows. Component of the ubiquinol-cytochrome c reductase complex (complex III or cytochrome b-c1 complex) that is part of the mitochondrial respiratory chain. The b-c1 complex mediates electron transfer from ubiquinol to cytochrome c. Contributes to the generation of a proton gradient across the mitochondrial membrane that is then used for ATP synthesis. This chain is Cytochrome b (MT-CYB), found in Baeolophus inornatus (Oak titmouse).